We begin with the raw amino-acid sequence, 358 residues long: Probable RNA methyltransferase MXAN_6459 (358 aa).

The active-site Proton acceptor is the Glu92. Residues 99–327 enclose the Radical SAM core domain; that stretch reads FDEKYVICVS…PVARRYSGGK (229 aa). Cys106 and Cys333 are joined by a disulfide. Residues Cys113, Cys117, and Cys120 each contribute to the [4Fe-4S] cluster site. S-adenosyl-L-methionine is bound by residues 160–161, Ser192, 215–217, and Asp289; these read GE and SVT. Cys333 serves as the catalytic S-methylcysteine intermediate.

Belongs to the radical SAM superfamily. RlmN family. [4Fe-4S] cluster serves as cofactor.

It localises to the cytoplasm. The sequence is that of Probable RNA methyltransferase MXAN_6459 from Myxococcus xanthus (strain DK1622).